The chain runs to 245 residues: Eukaryotic translation initiation factor 6 (245 aa).

Tyr113 is modified (phosphotyrosine). Thr165 bears the Phosphothreonine mark. Ser166 carries the phosphoserine modification. A phosphoserine; by CK1 mark is found at Ser174 and Ser175. Phosphoserine; by PKC is present on Ser235. A phosphoserine mark is found at Ser239 and Ser243.

It belongs to the eIF-6 family. Monomer. Associates with the 60S ribosomal subunit. Interacts with RACK1. Interacts with DICER1, AGO2, TARBP2, MOV10 and RPL7A; they form a large RNA-induced silencing complex (RISC). In terms of processing, phosphorylation at Ser-174 and Ser-175 by CSNK1D/CK1 promotes nuclear export. Post-translationally, ufmylated by UFL1.

Its subcellular location is the cytoplasm. It localises to the nucleus. The protein localises to the nucleolus. In terms of biological role, binds to the 60S ribosomal subunit and prevents its association with the 40S ribosomal subunit to form the 80S initiation complex in the cytoplasm. Behaves as a stimulatory translation initiation factor downstream insulin/growth factors. Is also involved in ribosome biogenesis. Associates with pre-60S subunits in the nucleus and is involved in its nuclear export. Cytoplasmic release of TIF6 from 60S subunits and nuclear relocalization is promoted by a RACK1 (RACK1)-dependent protein kinase C activity. In tissues responsive to insulin, controls fatty acid synthesis and glycolysis by exerting translational control of adipogenic transcription factors such as CEBPB, CEBPD and ATF4 that have G/C rich or uORF in their 5'UTR. Required for ROS-dependent megakaryocyte maturation and platelets formation, controls the expression of mitochondrial respiratory chain genes involved in reactive oxygen species (ROS) synthesis. Involved in miRNA-mediated gene silencing by the RNA-induced silencing complex (RISC). Required for both miRNA-mediated translational repression and miRNA-mediated cleavage of complementary mRNAs by RISC. Modulates cell cycle progression and global translation of pre-B cells, its activation seems to be rate-limiting in tumorigenesis and tumor growth. In Bos taurus (Bovine), this protein is Eukaryotic translation initiation factor 6.